Consider the following 359-residue polypeptide: 3-dehydroquinate synthase (359 aa).

NAD(+)-binding positions include 72 to 77, 106 to 110, 130 to 131, lysine 143, lysine 152, and 170 to 173; these read EGEEHK, GVVGD, TT, and TLTT. 3 residues coordinate Zn(2+): glutamate 185, histidine 248, and histidine 265.

Belongs to the sugar phosphate cyclases superfamily. Dehydroquinate synthase family. Co(2+) is required as a cofactor. Zn(2+) serves as cofactor. Requires NAD(+) as cofactor.

The protein localises to the cytoplasm. The catalysed reaction is 7-phospho-2-dehydro-3-deoxy-D-arabino-heptonate = 3-dehydroquinate + phosphate. Its pathway is metabolic intermediate biosynthesis; chorismate biosynthesis; chorismate from D-erythrose 4-phosphate and phosphoenolpyruvate: step 2/7. Functionally, catalyzes the conversion of 3-deoxy-D-arabino-heptulosonate 7-phosphate (DAHP) to dehydroquinate (DHQ). This is 3-dehydroquinate synthase from Pelobacter propionicus (strain DSM 2379 / NBRC 103807 / OttBd1).